A 226-amino-acid polypeptide reads, in one-letter code: MKLTFLGHAVLLISDIEGKYNVIIDPFITGNPAYPKDFQLPKIDYIMVTHGHGDHLGDTVELCKKYNSTVISNFEICNYLQLKGCKIHPMHVGGVYYFEFGKVKLTPAIHGSGIHEGDKVLYGGNPCGFLIKVEGKNIYHAGDTGLTKEFELLKDIDVAFLPIGGNFVMDVEDALVALEMIKPKIVVPIHYNTWDIIKADEQKFKEGAEKLGIKCVILKPGESLEI.

Belongs to the UPF0173 family.

The polypeptide is UPF0173 metal-dependent hydrolase Fnod_0635 (Fervidobacterium nodosum (strain ATCC 35602 / DSM 5306 / Rt17-B1)).